The following is a 243-amino-acid chain: Small ribosomal subunit protein uS3 (243 aa).

The 69-residue stretch at Leu-39 to His-107 folds into the KH type-2 domain. A disordered region spans residues Val-212–Ala-243.

The protein belongs to the universal ribosomal protein uS3 family. As to quaternary structure, part of the 30S ribosomal subunit. Forms a tight complex with proteins S10 and S14.

Its function is as follows. Binds the lower part of the 30S subunit head. Binds mRNA in the 70S ribosome, positioning it for translation. The polypeptide is Small ribosomal subunit protein uS3 (Chloroflexus aurantiacus (strain ATCC 29364 / DSM 637 / Y-400-fl)).